Consider the following 450-residue polypeptide: Glutamate-1-semialdehyde 2,1-aminomutase (450 aa).

An N6-(pyridoxal phosphate)lysine modification is found at Lys-262.

This sequence belongs to the class-III pyridoxal-phosphate-dependent aminotransferase family. HemL subfamily. Homodimer. Pyridoxal 5'-phosphate serves as cofactor.

Its subcellular location is the cytoplasm. The catalysed reaction is (S)-4-amino-5-oxopentanoate = 5-aminolevulinate. It functions in the pathway porphyrin-containing compound metabolism; protoporphyrin-IX biosynthesis; 5-aminolevulinate from L-glutamyl-tRNA(Glu): step 2/2. This chain is Glutamate-1-semialdehyde 2,1-aminomutase, found in Campylobacter hominis (strain ATCC BAA-381 / DSM 21671 / CCUG 45161 / LMG 19568 / NCTC 13146 / CH001A).